The chain runs to 258 residues: Thiamine thiazole synthase (258 aa).

Residues Ser36, 55 to 56, Gly63, Ile127, and 153 to 155 contribute to the NAD(+) site; these read ER and HVD. The Fe cation site is built by Asp155 and His170. NAD(+) is bound at residue Met224. Position 234 (Arg234) interacts with glycine.

The protein belongs to the THI4 family. Homooctamer; tetramer of dimers. It depends on Fe(2+) as a cofactor.

The catalysed reaction is hydrogen sulfide + glycine + NAD(+) = ADP-5-ethyl-4-methylthiazole-2-carboxylate + nicotinamide + 3 H2O + H(+). Its pathway is cofactor biosynthesis; thiamine diphosphate biosynthesis. Its function is as follows. Involved in the biosynthesis of the thiazole moiety of thiamine. Catalyzes the conversion of NAD and glycine to adenosine diphosphate 5-(2-hydroxyethyl)-4-methylthiazole-2-carboxylate (ADT), an adenylated thiazole intermediate, using free sulfide as a source of sulfur. The chain is Thiamine thiazole synthase from Methanothermobacter thermautotrophicus (strain ATCC 29096 / DSM 1053 / JCM 10044 / NBRC 100330 / Delta H) (Methanobacterium thermoautotrophicum).